A 150-amino-acid chain; its full sequence is Snaclec CTL-Eoc125 (150 aa).

Residues 1–23 (MGRFISVSFGLLVVFLSLSGIGA) form the signal peptide. Disulfide bonds link Cys27–Cys38, Cys55–Cys144, and Cys121–Cys136. Residues 34-145 (YEGHCYKVFS…CSSTQQFICK (112 aa)) enclose the C-type lectin domain.

Belongs to the snaclec family. Heterodimer; disulfide-linked. In terms of tissue distribution, expressed by the venom gland.

The protein localises to the secreted. Its function is as follows. Interferes with one step of hemostasis (modulation of platelet aggregation, or coagulation cascade, for example). The polypeptide is Snaclec CTL-Eoc125 (Echis ocellatus (Ocellated saw-scaled viper)).